Here is a 912-residue protein sequence, read N- to C-terminus: Protein translocase subunit SecA (912 aa).

ATP-binding positions include Gln87, 105 to 109 (GEGKT), and Asp508. The tract at residues 869–912 (EQMQGGNAPVPVSQVTRDEPKVGRNDPCPCGSGKKYKHCHGQLS) is disordered. Residues Cys896, Cys898, Cys907, and His908 each contribute to the Zn(2+) site. Basic residues predominate over residues 902–912 (KKYKHCHGQLS).

The protein belongs to the SecA family. As to quaternary structure, monomer and homodimer. Part of the essential Sec protein translocation apparatus which comprises SecA, SecYEG and auxiliary proteins SecDF-YajC and YidC. It depends on Zn(2+) as a cofactor.

The protein localises to the cell inner membrane. It is found in the cytoplasm. The enzyme catalyses ATP + H2O + cellular proteinSide 1 = ADP + phosphate + cellular proteinSide 2.. Functionally, part of the Sec protein translocase complex. Interacts with the SecYEG preprotein conducting channel. Has a central role in coupling the hydrolysis of ATP to the transfer of proteins into and across the cell membrane, serving both as a receptor for the preprotein-SecB complex and as an ATP-driven molecular motor driving the stepwise translocation of polypeptide chains across the membrane. The polypeptide is Protein translocase subunit SecA (Xanthomonas axonopodis pv. citri (strain 306)).